The chain runs to 142 residues: Large ribosomal subunit protein uL13 (142 aa).

This sequence belongs to the universal ribosomal protein uL13 family. As to quaternary structure, part of the 50S ribosomal subunit.

Functionally, this protein is one of the early assembly proteins of the 50S ribosomal subunit, although it is not seen to bind rRNA by itself. It is important during the early stages of 50S assembly. This Saccharophagus degradans (strain 2-40 / ATCC 43961 / DSM 17024) protein is Large ribosomal subunit protein uL13.